We begin with the raw amino-acid sequence, 339 residues long: Phenylalanine--tRNA ligase alpha subunit (339 aa).

E253 provides a ligand contact to Mg(2+).

This sequence belongs to the class-II aminoacyl-tRNA synthetase family. Phe-tRNA synthetase alpha subunit type 1 subfamily. In terms of assembly, tetramer of two alpha and two beta subunits. It depends on Mg(2+) as a cofactor.

Its subcellular location is the cytoplasm. It carries out the reaction tRNA(Phe) + L-phenylalanine + ATP = L-phenylalanyl-tRNA(Phe) + AMP + diphosphate + H(+). The chain is Phenylalanine--tRNA ligase alpha subunit from Ruthia magnifica subsp. Calyptogena magnifica.